Reading from the N-terminus, the 609-residue chain is Glutamine--fructose-6-phosphate aminotransferase [isomerizing] (609 aa).

Cysteine 2 acts as the Nucleophile; for GATase activity in catalysis. One can recognise a Glutamine amidotransferase type-2 domain in the interval 2–218 (CGIVGAIAQR…EGDIAEITRR (217 aa)). 2 SIS domains span residues 286 to 426 (ADEL…LKGL) and 458 to 599 (LAED…VDQP). Lysine 604 functions as the For Fru-6P isomerization activity in the catalytic mechanism.

In terms of assembly, homodimer.

Its subcellular location is the cytoplasm. The catalysed reaction is D-fructose 6-phosphate + L-glutamine = D-glucosamine 6-phosphate + L-glutamate. In terms of biological role, catalyzes the first step in hexosamine metabolism, converting fructose-6P into glucosamine-6P using glutamine as a nitrogen source. The protein is Glutamine--fructose-6-phosphate aminotransferase [isomerizing] of Salmonella typhimurium (strain LT2 / SGSC1412 / ATCC 700720).